Reading from the N-terminus, the 593-residue chain is MTSRRWFHPNITGVEAENLLLTRGVDGSFLARPSKSNPGDFTLSVRRTGAVTHIKIQNTGDYYDLYGGEKFATLAELVQYYMEHHGQLKEKNGDVIELKYPLNCADPTSERWFHGHLSGREAEKLLTEKGKHGSFLVRESQSHPGDFVLSVRTGDDKGESNDGKSKVTHVMIHCQDLKYDVGGGEKFDSLTDLVEHYKKNPMVETLGTVLQLKQPLNTTRINAAEIESRVRELSKLAETTDKVKQGFWEEFETLQQQECKLLYSRKEGQRQENKNKNRYKNILPFDHTRVVLHDGDPNEPVSDYINANIIMPEFETKCNNSKPKKSYIATQGCLQNTVNDFWRMVFQENSRVIVMTTKEVERGKSKCVKYWPDEYSLKEYGVMRVRNVKESAAHDYTLRELKLSKVGQGNTERTVWQYHFRTWPDHGVPSDPGGVLDFLEEVHHKQESISDAGPVVVHCSAGIGRTGTFIVIDILIDIIREKGVDCDIDVPKTIQMVRSQRSGMVQTEAQYRFIYMAVQHYIETLQRRIEEEQKSKRKGHEYTNIKYSLSDQTSGDQSPLPPCTPTPTCPEMREDSARVYENVGLMQQQKSFR.

SH2 domains are found at residues 6–102 and 112–216; these read WFHP…KYPL and WFHG…KQPL. The 275-residue stretch at 247–521 folds into the Tyrosine-protein phosphatase domain; sequence FWEEFETLQQ…RFIYMAVQHY (275 aa). Substrate is bound by residues Asp425, 459-465, and Gln506; that span reads CSAGIGR. Catalysis depends on Cys459, which acts as the Phosphocysteine intermediate. Over residues 548–557 the composition is skewed to polar residues; sequence SLSDQTSGDQ. The interval 548–575 is disordered; it reads SLSDQTSGDQSPLPPCTPTPTCPEMRED. Residues 559 to 568 show a composition bias toward pro residues; sequence PLPPCTPTPT.

It belongs to the protein-tyrosine phosphatase family. Non-receptor class 2 subfamily. In terms of processing, phosphorylated by tyrosine-protein kinases. As to expression, expressed in embryonic fibroblast, hematopoietic, erythroid, myeloid and lymphoid cells.

It is found in the cytoplasm. The catalysed reaction is O-phospho-L-tyrosyl-[protein] + H2O = L-tyrosyl-[protein] + phosphate. In terms of biological role, this PTPase activity may directly link growth factor receptors and other signaling proteins through protein-tyrosine phosphorylation. The SH2 regions may interact with other cellular components to modulate its own phosphatase activity against interacting substrates. May play a positive role during the stages of erythroid cell proliferation. The polypeptide is Tyrosine-protein phosphatase non-receptor type 11 (PTPN11) (Gallus gallus (Chicken)).